We begin with the raw amino-acid sequence, 499 residues long: Probable cytosol aminopeptidase (499 aa).

Residues lysine 263 and aspartate 268 each coordinate Mn(2+). Lysine 275 is an active-site residue. The Mn(2+) site is built by aspartate 286, aspartate 345, and glutamate 347. Arginine 349 is a catalytic residue.

It belongs to the peptidase M17 family. Mn(2+) is required as a cofactor.

Its subcellular location is the cytoplasm. It carries out the reaction Release of an N-terminal amino acid, Xaa-|-Yaa-, in which Xaa is preferably Leu, but may be other amino acids including Pro although not Arg or Lys, and Yaa may be Pro. Amino acid amides and methyl esters are also readily hydrolyzed, but rates on arylamides are exceedingly low.. The enzyme catalyses Release of an N-terminal amino acid, preferentially leucine, but not glutamic or aspartic acids.. Its function is as follows. Presumably involved in the processing and regular turnover of intracellular proteins. Catalyzes the removal of unsubstituted N-terminal amino acids from various peptides. This Chlamydia trachomatis serovar L2 (strain ATCC VR-902B / DSM 19102 / 434/Bu) protein is Probable cytosol aminopeptidase.